The chain runs to 53 residues: Toxin CjTL7 (53 aa).

A signal peptide spans 1–22 (MMIKVLLLLSSALVLFTPEAEG). The residue at position 51 (W51) is a Tryptophan amide.

Post-translationally, contains 4 disulfide bonds.

The protein resides in the secreted. It is found in the nematocyst. Functionally, in vivo, only causes a weak change in behavior in shrimps (C.multidentata) (slight twitching of the walking legs), but no lethal effect is observed. No activity is observed when injected into fly larvae (M.domestica). The sequence is that of Toxin CjTL7 from Epiactis japonica (Sea anemone).